A 331-amino-acid chain; its full sequence is Major outer membrane protein P.IB (331 aa).

Residues 1-19 form the signal peptide; that stretch reads MKKSLIALTLAALPVAAMA.

It belongs to the Gram-negative porin family. Homotrimer.

It is found in the cell outer membrane. Functionally, serves as a slightly cation selective porin. This chain is Major outer membrane protein P.IB (porB), found in Neisseria meningitidis serogroup B.